We begin with the raw amino-acid sequence, 166 residues long: Lipoprotein signal peptidase (166 aa).

3 helical membrane-spanning segments follow: residues 12 to 32 (WLWL…LILQ), 70 to 90 (WFFA…MYRS), and 102 to 122 (ALII…GFVV). Active-site residues include aspartate 123 and aspartate 141. A helical transmembrane segment spans residues 137–157 (FNLADTAICIGAALIVLEGFL).

The protein belongs to the peptidase A8 family.

It is found in the cell inner membrane. The enzyme catalyses Release of signal peptides from bacterial membrane prolipoproteins. Hydrolyzes -Xaa-Yaa-Zaa-|-(S,diacylglyceryl)Cys-, in which Xaa is hydrophobic (preferably Leu), and Yaa (Ala or Ser) and Zaa (Gly or Ala) have small, neutral side chains.. It functions in the pathway protein modification; lipoprotein biosynthesis (signal peptide cleavage). In terms of biological role, this protein specifically catalyzes the removal of signal peptides from prolipoproteins. This chain is Lipoprotein signal peptidase, found in Salmonella paratyphi A (strain ATCC 9150 / SARB42).